The following is a 214-amino-acid chain: Holliday junction branch migration complex subunit RuvA (214 aa).

The domain I stretch occupies residues 1–63 (MIASLSGTVE…EDALTLYGFA (63 aa)). Residues 64 to 142 (DRDEREVFEV…PTGEPVPGAE (79 aa)) form a domain II region. Positions 143–151 (AEASDEPAV) are flexible linker. The segment at 151–214 (VETVWHADVV…GMAGAVRGGR (64 aa)) is domain III.

This sequence belongs to the RuvA family. As to quaternary structure, homotetramer. Forms an RuvA(8)-RuvB(12)-Holliday junction (HJ) complex. HJ DNA is sandwiched between 2 RuvA tetramers; dsDNA enters through RuvA and exits via RuvB. An RuvB hexamer assembles on each DNA strand where it exits the tetramer. Each RuvB hexamer is contacted by two RuvA subunits (via domain III) on 2 adjacent RuvB subunits; this complex drives branch migration. In the full resolvosome a probable DNA-RuvA(4)-RuvB(12)-RuvC(2) complex forms which resolves the HJ.

It is found in the cytoplasm. Functionally, the RuvA-RuvB-RuvC complex processes Holliday junction (HJ) DNA during genetic recombination and DNA repair, while the RuvA-RuvB complex plays an important role in the rescue of blocked DNA replication forks via replication fork reversal (RFR). RuvA specifically binds to HJ cruciform DNA, conferring on it an open structure. The RuvB hexamer acts as an ATP-dependent pump, pulling dsDNA into and through the RuvAB complex. HJ branch migration allows RuvC to scan DNA until it finds its consensus sequence, where it cleaves and resolves the cruciform DNA. The protein is Holliday junction branch migration complex subunit RuvA of Micrococcus luteus (strain ATCC 4698 / DSM 20030 / JCM 1464 / CCM 169 / CCUG 5858 / IAM 1056 / NBRC 3333 / NCIMB 9278 / NCTC 2665 / VKM Ac-2230) (Micrococcus lysodeikticus).